We begin with the raw amino-acid sequence, 379 residues long: S-adenosylmethionine:tRNA ribosyltransferase-isomerase (379 aa).

The segment at 35-58 (AESRPHAESVPHAESRPHAESAFS) is disordered.

Belongs to the QueA family. Monomer.

It localises to the cytoplasm. It carries out the reaction 7-aminomethyl-7-carbaguanosine(34) in tRNA + S-adenosyl-L-methionine = epoxyqueuosine(34) in tRNA + adenine + L-methionine + 2 H(+). It participates in tRNA modification; tRNA-queuosine biosynthesis. Functionally, transfers and isomerizes the ribose moiety from AdoMet to the 7-aminomethyl group of 7-deazaguanine (preQ1-tRNA) to give epoxyqueuosine (oQ-tRNA). This is S-adenosylmethionine:tRNA ribosyltransferase-isomerase from Rhizobium leguminosarum bv. trifolii (strain WSM2304).